Consider the following 422-residue polypeptide: Phagosome assembly factor 1 (422 aa).

This sequence belongs to the PHAF1 family. As to quaternary structure, interacts with BCAS3; the interaction is requrired for the association with the phagophore.

It localises to the cytoplasm. The protein localises to the preautophagosomal structure. Functionally, plays a regulatory role in autophagic activity. In complex with BCAS3, associates with the autophagosome formation site during both non-selective and selective autophagy. This is Phagosome assembly factor 1 from Homo sapiens (Human).